The chain runs to 462 residues: Asparagine--tRNA ligase (462 aa).

This sequence belongs to the class-II aminoacyl-tRNA synthetase family. As to quaternary structure, homodimer.

It localises to the cytoplasm. The enzyme catalyses tRNA(Asn) + L-asparagine + ATP = L-asparaginyl-tRNA(Asn) + AMP + diphosphate + H(+). This chain is Asparagine--tRNA ligase, found in Borreliella burgdorferi (strain ATCC 35210 / DSM 4680 / CIP 102532 / B31) (Borrelia burgdorferi).